The primary structure comprises 277 residues: Ethanolamine ammonia-lyase small subunit (277 aa).

Adenosylcob(III)alamin contacts are provided by V164, E185, and C214.

Belongs to the EutC family. In terms of assembly, the basic unit is a heterodimer which dimerizes to form tetramers. The heterotetramers trimerize; 6 large subunits form a core ring with 6 small subunits projecting outwards. Requires adenosylcob(III)alamin as cofactor.

The protein localises to the bacterial microcompartment. It catalyses the reaction ethanolamine = acetaldehyde + NH4(+). Its pathway is amine and polyamine degradation; ethanolamine degradation. Catalyzes the deamination of various vicinal amino-alcohols to oxo compounds. Allows this organism to utilize ethanolamine as the sole source of nitrogen and carbon in the presence of external vitamin B12. In Pseudomonas fluorescens (strain SBW25), this protein is Ethanolamine ammonia-lyase small subunit.